The chain runs to 119 residues: Small capsomere-interacting protein (119 aa).

Belongs to the herpesviridae small capsomere-interacting protein family. As to quaternary structure, interacts with the major capsid protein/MCP.

Its subcellular location is the virion. It localises to the host nucleus. Its function is as follows. Participates in the assembly of the infectious particles by decorating the outer surface of the capsid shell and thus forming a layer between the capsid and the tegument. Complexes composed of the major capsid protein and small capsomere-interacting protein/SCP assemble together in the host cytoplasm and are translocated to the nucleus, where they accumulate and participate in capsid assembly. This Equine herpesvirus 1 (strain V592) (EHV-1) protein is Small capsomere-interacting protein.